The following is a 395-amino-acid chain: Abhydrolase domain-containing protein (395 aa).

Residues Pro117 to Pro331 form the AB hydrolase-1 domain. Active-site charge relay system residues include Ser200, Asp327, and His356.

Belongs to the AB hydrolase superfamily. AB hydrolase 4 family.

This chain is Abhydrolase domain-containing protein (abhd), found in Dictyostelium discoideum (Social amoeba).